Consider the following 115-residue polypeptide: MEKAYRIKKNSDFQAIYRRGKSVANRQFVIYMMPDKGLTHFKLGISVSKKLGNAVTRNRIKRAIRENFKVHKDDMLPRNIIVIARHPAKDMTVLEIQKSLEHVLKVAKLFNKRIK.

Belongs to the RnpA family. Consists of a catalytic RNA component (M1 or rnpB) and a protein subunit.

The catalysed reaction is Endonucleolytic cleavage of RNA, removing 5'-extranucleotides from tRNA precursor.. Functionally, RNaseP catalyzes the removal of the 5'-leader sequence from pre-tRNA to produce the mature 5'-terminus. It can also cleave other RNA substrates such as 4.5S RNA. The protein component plays an auxiliary but essential role in vivo by binding to the 5'-leader sequence and broadening the substrate specificity of the ribozyme. In Staphylococcus carnosus (strain TM300), this protein is Ribonuclease P protein component.